A 90-amino-acid polypeptide reads, in one-letter code: Large ribosomal subunit protein eL34 (90 aa).

The tract at residues A38 to P65 is disordered. Over residues R51 to A62 the composition is skewed to basic residues.

The protein belongs to the eukaryotic ribosomal protein eL34 family.

The sequence is that of Large ribosomal subunit protein eL34 (rpl34e) from Aeropyrum pernix (strain ATCC 700893 / DSM 11879 / JCM 9820 / NBRC 100138 / K1).